We begin with the raw amino-acid sequence, 240 residues long: Regulatory protein RecX (240 aa).

It belongs to the RecX family.

It is found in the cytoplasm. Its function is as follows. Modulates RecA activity. This chain is Regulatory protein RecX, found in Lacticaseibacillus paracasei (strain ATCC 334 / BCRC 17002 / CCUG 31169 / CIP 107868 / KCTC 3260 / NRRL B-441) (Lactobacillus paracasei).